The primary structure comprises 152 residues: Protein NrdI (152 aa).

Belongs to the NrdI family.

Functionally, probably involved in ribonucleotide reductase function. In Mycolicibacterium vanbaalenii (strain DSM 7251 / JCM 13017 / BCRC 16820 / KCTC 9966 / NRRL B-24157 / PYR-1) (Mycobacterium vanbaalenii), this protein is Protein NrdI.